We begin with the raw amino-acid sequence, 345 residues long: MKGELLLFSSVIVLLQVVCSCPDKCYCQSSTNFVDCSQQGLAEIPSHLPPQTRTLHLQDNQIHHLPAFAFRSVPWLMTLNLSNNSLSNLAPGAFHGLQHLQVLNLTQNSLLSLESRLFHSLPQLRELDLSSNNISHLPTSLGETWENLTILAVQQNQLQQLDRALLESMPSVRLLLLKDNLWKCNCHLLGLKLWLEKFVYKGGLTDGIICESPDTWKGKDLLRIPHELYQPCPLPAPDPVSSQAQWPGSAHGVVLRPPENHNAGERELLECELKPKPRPANLRHAIATVIITGVVCGIVCLMMLAAAIYGCTYAAITAQYHGGPLAQTNDPGKVEEKERFDSSPA.

A signal peptide spans Met-1–Cys-27. The LRRNT domain occupies Gln-28–Pro-50. Topologically, residues Gln-28–Thr-288 are extracellular. LRR repeat units follow at residues Gln-51–Ser-72, Trp-75–Gly-96, His-99–Ser-120, Gln-123–Thr-144, and Asn-147–Ser-168. The N-linked (GlcNAc...) asparagine glycan is linked to Asn-104. Asn-147 is a glycosylation site (N-linked (GlcNAc...) asparagine). Residues Asn-180 to Leu-234 enclose the LRRCT domain. Residues Val-289 to Tyr-309 form a helical membrane-spanning segment. At Gly-310–Ala-345 the chain is on the cytoplasmic side. Positions Ala-326 to Ala-345 are disordered. A compositionally biased stretch (basic and acidic residues) spans Gly-332–Ala-345.

The protein localises to the membrane. The polypeptide is Leucine-rich repeat and transmembrane domain-containing protein 1 (LRTM1) (Homo sapiens (Human)).